A 26-amino-acid chain; its full sequence is Delta-hemolysin (26 aa).

Position 1 is an N-formylmethionine (Met1).

This sequence belongs to the delta-lysin family.

Its subcellular location is the secreted. It localises to the host cell membrane. Its function is as follows. Lyses erythrocytes and many other mammalian cells. This chain is Delta-hemolysin (hld), found in Staphylococcus aureus (strain Mu50 / ATCC 700699).